The primary structure comprises 321 residues: Sideroflexin-3 (321 aa).

Residue M1 is modified to N-acetylmethionine. 4 helical membrane passes run 146 to 164 (LGTA…ALGL), 174 to 194 (LVGR…NIPL), 225 to 245 (IFQV…IPPV), and 266 to 286 (LQVG…CALF).

Belongs to the sideroflexin family.

The protein resides in the mitochondrion membrane. It carries out the reaction L-serine(in) = L-serine(out). Mitochondrial serine transporter that mediates transport of serine into mitochondria, an important step of the one-carbon metabolism pathway. Mitochondrial serine is converted to glycine and formate, which then exits to the cytosol where it is used to generate the charged folates that serve as one-carbon donors. The sequence is that of Sideroflexin-3 (Sfxn3) from Rattus norvegicus (Rat).